The sequence spans 189 residues: Putative L,D-transpeptidase in ATP synthase subunits region ORF 5 (189 aa).

The segment at residues 1-35 is a signal peptide (tat-type signal); it reads MTDTLNRRAAMALGLASAAGAALATPALSQDAAPA. A L,D-TPase catalytic domain is found at 59 to 189; it reads PMLVADTFSR…CPVGTRVRVI (131 aa). The active-site Proton donor/acceptor is the histidine 149. Cysteine 165 serves as the catalytic Nucleophile.

This sequence belongs to the YkuD family. In terms of processing, predicted to be exported by the Tat system. The position of the signal peptide cleavage has not been experimentally proven.

The protein operates within cell wall biogenesis; peptidoglycan biosynthesis. The sequence is that of Putative L,D-transpeptidase in ATP synthase subunits region ORF 5 from Fuscovulum blasticum (Rhodobacter blasticus).